The chain runs to 175 residues: Peptide deformylase (175 aa).

The Fe cation site is built by Cys-96 and His-138. Glu-139 is a catalytic residue. His-142 is a binding site for Fe cation.

The protein belongs to the polypeptide deformylase family. It depends on Fe(2+) as a cofactor.

It catalyses the reaction N-terminal N-formyl-L-methionyl-[peptide] + H2O = N-terminal L-methionyl-[peptide] + formate. Removes the formyl group from the N-terminal Met of newly synthesized proteins. Requires at least a dipeptide for an efficient rate of reaction. N-terminal L-methionine is a prerequisite for activity but the enzyme has broad specificity at other positions. The polypeptide is Peptide deformylase (Campylobacter jejuni subsp. jejuni serotype O:2 (strain ATCC 700819 / NCTC 11168)).